Consider the following 130-residue polypeptide: Small ribosomal subunit protein uS11c (130 aa).

The protein belongs to the universal ribosomal protein uS11 family. As to quaternary structure, part of the 30S ribosomal subunit.

It is found in the plastid. The protein resides in the chloroplast. This Zygnema circumcarinatum (Green alga) protein is Small ribosomal subunit protein uS11c.